Consider the following 189-residue polypeptide: Protein GrpE (189 aa).

The disordered stretch occupies residues 1–24 (MADEQNLDTQNPEAQAAENAAPSD). Positions 10–24 (QNPEAQAAENAAPSD) are enriched in low complexity.

The protein belongs to the GrpE family. As to quaternary structure, homodimer.

The protein resides in the cytoplasm. Participates actively in the response to hyperosmotic and heat shock by preventing the aggregation of stress-denatured proteins, in association with DnaK and GrpE. It is the nucleotide exchange factor for DnaK and may function as a thermosensor. Unfolded proteins bind initially to DnaJ; upon interaction with the DnaJ-bound protein, DnaK hydrolyzes its bound ATP, resulting in the formation of a stable complex. GrpE releases ADP from DnaK; ATP binding to DnaK triggers the release of the substrate protein, thus completing the reaction cycle. Several rounds of ATP-dependent interactions between DnaJ, DnaK and GrpE are required for fully efficient folding. The protein is Protein GrpE of Ectopseudomonas mendocina (strain ymp) (Pseudomonas mendocina).